The following is a 530-amino-acid chain: Cation transporter HKT2;1 (530 aa).

Topologically, residues Met-1–Pro-40 are cytoplasmic. Transmembrane regions (helical) follow at residues Phe-41–Phe-61 and Ile-102–Leu-122. Topologically, residues Met-123–Trp-186 are cytoplasmic. 2 helical membrane passes run Phe-187 to Val-207 and Gly-260 to Leu-280. Over Arg-281–Thr-317 the chain is Cytoplasmic. 2 helical membrane passes run Ala-318–Val-338 and Ile-372–Pro-392. At Pro-393 to Val-418 the chain is on the cytoplasmic side. 2 consecutive transmembrane segments (helical) span residues Val-419–Ile-439 and Ser-494–Gly-514. Topologically, residues Arg-515–Trp-530 are cytoplasmic.

This sequence belongs to the TrkH potassium transport family. HKT (TC 2.A.38.3) subfamily. Expressed in epidermis and vascular tissue of endodermis in roots, and in cells surrounding the vasculature in leaves.

Its subcellular location is the membrane. The catalysed reaction is Na(+)(in) = Na(+)(out). Seems to be involved in regulation of potassium-sodium homeostasis. Seems to act as a high-affinity sodium transporter, which mediates increased sodium uptake in roots under potassium deficiency and contributes to sodium accumulation and salt toxicity. Involved in nutritional sodium uptake and distribution in potassium-starved roots to allow plant growth. May also act as a potassium transporter. Functions as a sodium-potassium cotransporter. The sequence is that of Cation transporter HKT2;1 from Oryza sativa subsp. indica (Rice).